A 500-amino-acid chain; its full sequence is Maturase K (500 aa).

This sequence belongs to the intron maturase 2 family. MatK subfamily.

It is found in the plastid. It localises to the chloroplast. Its function is as follows. Usually encoded in the trnK tRNA gene intron. Probably assists in splicing its own and other chloroplast group II introns. This chain is Maturase K, found in Argentina anserina (Silverweed cinquefoil).